Here is a 430-residue protein sequence, read N- to C-terminus: Adenylosuccinate synthetase (430 aa).

Residues Gly-12–Lys-18 and Gly-40–Thr-42 each bind GTP. Asp-13 (proton acceptor) is an active-site residue. Mg(2+)-binding residues include Asp-13 and Gly-40. IMP is bound by residues Asp-13–Lys-16, Asn-38–His-41, Thr-128, Arg-142, Gln-223, Thr-238, and Arg-302. His-41 (proton donor) is an active-site residue. Residue Thr-298–Arg-304 participates in substrate binding. GTP contacts are provided by residues Arg-304, Ser-330–Asp-332, and Ser-412–Gly-414.

It belongs to the adenylosuccinate synthetase family. In terms of assembly, homodimer. The cofactor is Mg(2+).

Its subcellular location is the cytoplasm. It carries out the reaction IMP + L-aspartate + GTP = N(6)-(1,2-dicarboxyethyl)-AMP + GDP + phosphate + 2 H(+). It functions in the pathway purine metabolism; AMP biosynthesis via de novo pathway; AMP from IMP: step 1/2. In terms of biological role, plays an important role in the de novo pathway of purine nucleotide biosynthesis. Catalyzes the first committed step in the biosynthesis of AMP from IMP. The protein is Adenylosuccinate synthetase of Streptococcus agalactiae serotype III (strain NEM316).